A 155-amino-acid chain; its full sequence is Small ribosomal subunit protein uS7c (155 aa).

The protein belongs to the universal ribosomal protein uS7 family. As to quaternary structure, part of the 30S ribosomal subunit.

The protein resides in the plastid. It is found in the chloroplast. Its function is as follows. One of the primary rRNA binding proteins, it binds directly to 16S rRNA where it nucleates assembly of the head domain of the 30S subunit. The sequence is that of Small ribosomal subunit protein uS7c from Beta vulgaris (Sugar beet).